The primary structure comprises 77 residues: Small ribosomal subunit protein bS16c (77 aa).

It belongs to the bacterial ribosomal protein bS16 family.

The protein localises to the plastid. It is found in the chloroplast. The polypeptide is Small ribosomal subunit protein bS16c (Eucalyptus globulus subsp. globulus (Tasmanian blue gum)).